The chain runs to 517 residues: Crotonobetaine/carnitine--CoA ligase (517 aa).

It belongs to the ATP-dependent AMP-binding enzyme family.

The catalysed reaction is 4-(trimethylamino)butanoate + ATP + CoA = 4-(trimethylamino)butanoyl-CoA + AMP + diphosphate. It carries out the reaction crotonobetaine + ATP + CoA = crotonobetainyl-CoA + AMP + diphosphate. The enzyme catalyses (R)-carnitine + ATP + CoA = (R)-carnitinyl-CoA + AMP + diphosphate. It functions in the pathway amine and polyamine metabolism; carnitine metabolism. Catalyzes the transfer of CoA to carnitine, generating the initial carnitinyl-CoA needed for the CaiB reaction cycle. Also has activity toward crotonobetaine and gamma-butyrobetaine. The protein is Crotonobetaine/carnitine--CoA ligase of Salmonella paratyphi A (strain ATCC 9150 / SARB42).